A 500-amino-acid polypeptide reads, in one-letter code: L-arabinose isomerase (500 aa).

The Mn(2+) site is built by Glu-306, Glu-333, His-349, and His-448.

The protein belongs to the arabinose isomerase family. The cofactor is Mn(2+).

It catalyses the reaction beta-L-arabinopyranose = L-ribulose. The protein operates within carbohydrate degradation; L-arabinose degradation via L-ribulose; D-xylulose 5-phosphate from L-arabinose (bacterial route): step 1/3. Its function is as follows. Catalyzes the conversion of L-arabinose to L-ribulose. The sequence is that of L-arabinose isomerase from Cellvibrio japonicus (strain Ueda107) (Pseudomonas fluorescens subsp. cellulosa).